We begin with the raw amino-acid sequence, 293 residues long: MSIVALLIGLGPLIGWGFFPTVASKFGGKPVHQIIGATVGTLIFAIILAVVTSSGFPTGTNLLFALLSGAGWGFGQIITFKAFELIGSSRAMPVTTAFQLLGASLWGVFALGNWPGIGHKIIGFTALVVILIGARMTVWSERKEASNAKNLRRAVVLLLIGEFGYWLYSAAPQATSIDGLTAFLPQAMGMVIVAVIYGFMNMKSENPFRNKITWLQIISGFFFAFGALTYLISAQPNMNGLATGFILSQTSVVLATLTGIYFLKQHKTSKEMVITIIGLVLILVAASVTVFIK.

10 helical membrane-spanning segments follow: residues 2 to 24 (SIVA…TVAS), 34 to 56 (IIGA…SSGF), 63 to 80 (LFAL…IITF), 95 to 117 (TTAF…WPGI), 122 to 139 (IGFT…MTVW), 154 to 171 (AVVL…YSAA), 180 to 202 (LTAF…FMNM), 212 to 234 (ITWL…LISA), 241 to 263 (LATG…IYFL), and 273 to 292 (VITI…TVFI).

This sequence belongs to the GRP transporter (TC 2.A.7.5) family.

It is found in the cell membrane. Could be involved in the uptake of ribose. This chain is Putative ribose uptake protein RbsU (rbsU), found in Staphylococcus aureus (strain Mu50 / ATCC 700699).